The primary structure comprises 524 residues: MNMKKATIAATAGIAVTAFAAPTIASASTVVVEAGDTLWGIAQSKGTTVDALKKANNLTSDKIVPGQKLQVTEVASEKTEKSVSATWLNVRSGAGVDNSIVTSLKGGTKVTVEAAESNGWNKISYGEGKTGYVNGKYLGDAVTSAPVAKQEVKQETTKQTAPAAETKTEVKQSTPAPTAPKAAETKTAPVVDTNATTHTVKSGDTIWALSVKYGASVQDLMSWNNLSSSSIYVGQKIAVKQSAAKTAAPKAEVKTEAPAVEKETSTPVVKENTNTTVKKEVTTQTQTNTTKAPAQAAKPAPAPAPAPTVNTNASTYTVKSGDSLSKIANTFGTSVSKIKALNNLTSDNLQVGTVLKVKGTVPTTNTNNNSNTTAPTTNTSNNNTSSNTSTPSKNTNTNTNQGSSNSASASALIAEAQKHLGKAYSWGGNGPTTFDCSGFTSYVFAKSGISLPRTSGAQYASTSRISESQAKPGDLVFFDYGSGIAHVGIYVGNGQMINAQDNGVKYDNIHGSGWGKYLVGFGRV.

The signal sequence occupies residues Met1–Ala27. A LysM 1 domain is found at Ser28–Val71. An SH3b domain is found at Lys78 to Val142. A disordered region spans residues Gln150–Ala188. Low complexity predominate over residues Thr174–Ala188. Positions Thr196–Val239 constitute a LysM 2 domain. The segment covering Asn272 to Pro299 has biased composition (low complexity). Residues Asn272–Ala313 form a disordered region. Residues Ser314 to Val357 form the LysM 3 domain. Positions Thr360–Ser408 are disordered. Positions Pro362 to Ser408 are enriched in low complexity. The NlpC/P60 domain occupies Ser406 to Val524. Cys436 acts as the Nucleophile in catalysis. Catalysis depends on His486, which acts as the Proton acceptor. Asn498 is a catalytic residue.

This sequence belongs to the peptidase C40 family.

This major extracellular protein may be involved in the invasion of non-professional phagocytic cells by Listeria. The protein is Probable endopeptidase p60 (iap) of Listeria welshimeri.